A 250-amino-acid polypeptide reads, in one-letter code: 26S proteasome non-ATPase regulatory subunit 8 (250 aa).

In terms of domain architecture, PCI spans 63–233; the sequence is HDFETFDDYI…QEKPVNLDTV (171 aa).

This sequence belongs to the proteasome subunit S14 family.

Its function is as follows. Acts as a regulatory subunit of the 26S proteasome which is involved in the ATP-dependent degradation of ubiquitinated proteins. The protein is 26S proteasome non-ATPase regulatory subunit 8 of Caenorhabditis elegans.